The chain runs to 221 residues: Putative 3-methyladenine DNA glycosylase (221 aa).

This sequence belongs to the DNA glycosylase MPG family.

The polypeptide is Putative 3-methyladenine DNA glycosylase (Herpetosiphon aurantiacus (strain ATCC 23779 / DSM 785 / 114-95)).